The primary structure comprises 231 residues: Small ribosomal subunit protein uS5 (231 aa).

The S5 DRBM domain maps to 61-124 (KFRSKKPYRM…NRAKLNIIKV (64 aa)).

It belongs to the universal ribosomal protein uS5 family. As to quaternary structure, part of the 30S ribosomal subunit. Contacts protein S4.

With S4 and S12 plays an important role in translational accuracy. This is Small ribosomal subunit protein uS5 from Nanoarchaeum equitans (strain Kin4-M).